Consider the following 195-residue polypeptide: MPRAPRTYSKTYSTPKRPYESSRLDAELKLAGEFGLKNKREIYRISFQLSKIRRAARDLLTRDEKDPKRLFEGNALIRRLVRVGVLSEDKKKLDYVLALKVEDFLERRLQTQVYKLGLAKSVHHARVLITQRHIAVGKQIVNIPSFMVRLDSEKHIDFAPTSPFGGARPGRVARRNAARKAEASGEAAEEAEDEE.

An S4 RNA-binding domain is found at Arg107–Ala181. Residues Thr161–Glu195 are disordered. Lys180 participates in a covalent cross-link: Glycyl lysine isopeptide (Lys-Gly) (interchain with G-Cter in ubiquitin). Residue Ser184 is modified to Phosphoserine.

The protein belongs to the universal ribosomal protein uS4 family. In terms of assembly, component of the small ribosomal subunit (SSU). Mature yeast ribosomes consist of a small (40S) and a large (60S) subunit. The 40S small subunit contains 1 molecule of ribosomal RNA (18S rRNA) and 33 different proteins (encoded by 57 genes). The large 60S subunit contains 3 rRNA molecules (25S, 5.8S and 5S rRNA) and 46 different proteins (encoded by 81 genes). Interacts with snoRNA U3. uS11 interacts with MPP10. Component of the ribosomal small subunit (SSU) processome composed of at least 40 protein subunits and snoRNA U3.

The protein localises to the cytoplasm. It localises to the nucleus. The protein resides in the nucleolus. Its function is as follows. Component of the ribosome, a large ribonucleoprotein complex responsible for the synthesis of proteins in the cell. The small ribosomal subunit (SSU) binds messenger RNAs (mRNAs) and translates the encoded message by selecting cognate aminoacyl-transfer RNA (tRNA) molecules. The large subunit (LSU) contains the ribosomal catalytic site termed the peptidyl transferase center (PTC), which catalyzes the formation of peptide bonds, thereby polymerizing the amino acids delivered by tRNAs into a polypeptide chain. The nascent polypeptides leave the ribosome through a tunnel in the LSU and interact with protein factors that function in enzymatic processing, targeting, and the membrane insertion of nascent chains at the exit of the ribosomal tunnel. uS4 is involved in nucleolar processing of pre-18S ribosomal RNA and ribosome assembly. The chain is Small ribosomal subunit protein uS4B from Saccharomyces cerevisiae (strain ATCC 204508 / S288c) (Baker's yeast).